Consider the following 585-residue polypeptide: Pyruvate kinase (585 aa).

R32 contacts substrate. The K(+) site is built by N34, S36, D66, and T67. 34–37 (NFSH) lines the ATP pocket. R73 and K156 together coordinate ATP. Position 221 (E221) interacts with Mg(2+). The substrate site is built by G244, D245, and T277. D245 contributes to the Mg(2+) binding site.

Belongs to the pyruvate kinase family. This sequence in the C-terminal section; belongs to the PEP-utilizing enzyme family. Mg(2+) serves as cofactor. The cofactor is K(+).

The catalysed reaction is pyruvate + ATP = phosphoenolpyruvate + ADP + H(+). It participates in carbohydrate degradation; glycolysis; pyruvate from D-glyceraldehyde 3-phosphate: step 5/5. The protein is Pyruvate kinase (pyk) of Staphylococcus aureus (strain bovine RF122 / ET3-1).